The primary structure comprises 295 residues: MSGALDVLQMKEEDVLKFLAAGTHLGGTNLDFQMEQYIYKRKSDGIYIINLKRTWEKLLLAARAIVAIENPADVSVISSRNTGQRAVLKFAAATGATPIAGRFTPGTFTNQIQAAFREPRLLVVTDPRADHQPLTEASYVNLPTIALCNTDSPLRYVDIAIPCNNKGAHSVGLMWWMLAREVLRMRGTISREHPWEVMPDLYFYRDPEEIEKEEQAAAEKAVTKEEFQGEWTAPAPEFTATQPEVADWSEGVQVPSVPIQQFPTEDWSAQPATEDWSAAPTAQATEWVGTTTEWS.

Ser2 carries the N-acetylserine modification. At Ser43 the chain carries Phosphoserine. Residue Lys52 is modified to N6-acetyllysine. Residues 54–113 (TWEKLLLAARAIVAIENPADVSVISSRNTGQRAVLKFAAATGATPIAGRFTPGTFTNQIQ) form an interaction with PPP1R16B region. At Lys89 the chain carries N6-acetyllysine; alternate. Lys89 is covalently cross-linked (Glycyl lysine isopeptide (Lys-Gly) (interchain with G-Cter in SUMO2); alternate). Phosphothreonine is present on Thr97. Laminin-binding regions lie at residues 161 to 180 (IPCNNKGAHSVGLMWWMLAR) and 205 to 229 (RDPEEIEKEEQAAAEKAVTKEEFQG). [DE]-W-[ST] repeat units lie at residues 230 to 232 (EWT), 247 to 249 (DWS), 266 to 268 (DWS), 275 to 277 (DWS), and 293 to 295 (EWS). Residues 242–295 (QPEVADWSEGVQVPSVPIQQFPTEDWSAQPATEDWSAAPTAQATEWVGTTTEWS) are laminin-binding. The interval 266–295 (DWSAQPATEDWSAAPTAQATEWVGTTTEWS) is disordered. Residues 280–295 (PTAQATEWVGTTTEWS) are compositionally biased toward polar residues.

Belongs to the universal ribosomal protein uS2 family. In terms of assembly, monomer (37LRP) and homodimer (67LR). Component of the small ribosomal subunit. Mature ribosomes consist of a small (40S) and a large (60S) subunit. The 40S subunit contains about 33 different proteins and 1 molecule of RNA (18S). The 60S subunit contains about 49 different proteins and 3 molecules of RNA (28S, 5.8S and 5S). Interacts with RPS21. Interacts with several laminins including at least LAMB1. Interacts with MDK. The mature dimeric form interacts with PPP1R16B (via its fourth ankyrin repeat). Interacts with PPP1CA only in the presence of PPP1R16B. Post-translationally, acylated. Acylation may be a prerequisite for conversion of the monomeric 37 kDa laminin receptor precursor (37LRP) to the mature dimeric 67 kDa laminin receptor (67LR), and may provide a mechanism for membrane association. Cleaved by stromelysin-3 (ST3) at the cell surface. Cleavage by stromelysin-3 may be a mechanism to alter cell-extracellular matrix interactions.

Its subcellular location is the cell membrane. It localises to the cytoplasm. The protein localises to the nucleus. Required for the assembly and/or stability of the 40S ribosomal subunit. Required for the processing of the 20S rRNA-precursor to mature 18S rRNA in a late step of the maturation of 40S ribosomal subunits. Also functions as a cell surface receptor for laminin. Plays a role in cell adhesion to the basement membrane and in the consequent activation of signaling transduction pathways. May play a role in cell fate determination and tissue morphogenesis. Also acts as a receptor for several other ligands, including the pathogenic prion protein, viruses, and bacteria. Acts as a PPP1R16B-dependent substrate of PPP1CA. This chain is Small ribosomal subunit protein uS2, found in Oryctolagus cuniculus (Rabbit).